A 354-amino-acid polypeptide reads, in one-letter code: Rhodopsin (354 aa).

Over 1 to 36 the chain is Extracellular; sequence MNGTEGPYFYIPMVNTTGIVRSPYEYPQYYLVNPAA. Asn2 and Asn15 each carry an N-linked (GlcNAc...) asparagine glycan. The chain crosses the membrane as a helical span at residues 37–61; it reads YAALGAYMFFLILLGFPINFLTLYV. The Cytoplasmic portion of the chain corresponds to 62–73; sequence TLEHKKLRTPLN. A helical membrane pass occupies residues 74–96; that stretch reads YILLNLAVADLFMVFGGFTTTMY. Over 97-110 the chain is Extracellular; sequence TSMHGYFVLGRLGC. An intrachain disulfide couples Cys110 to Cys187. A helical membrane pass occupies residues 111 to 133; that stretch reads NLEGFFATLGGEIGLWSLVVLAI. Positions 134-136 match the 'Ionic lock' involved in activated form stabilization motif; that stretch reads ERW. Topologically, residues 134–152 are cytoplasmic; sequence ERWVVVCKPISNFRFGENH. A helical membrane pass occupies residues 153 to 173; sequence AIMGLAFTWIMACACAVPPLV. Topologically, residues 174–202 are extracellular; that stretch reads GWSRYIPEGMQCSCGVDYYTRAEGFNNES. Asn200 carries N-linked (GlcNAc...) asparagine glycosylation. Residues 203–224 traverse the membrane as a helical segment; the sequence is FVVYMFTCHFCIPLTIIGFCYG. Topologically, residues 225 to 252 are cytoplasmic; that stretch reads RLLCAVKEAAAAQQESETTQRAEREVTR. A helical transmembrane segment spans residues 253-274; that stretch reads MVILMVVGFLVCWLPYASVAWY. Residues 275–286 are Extracellular-facing; it reads IFSNQGSQFGPL. A helical membrane pass occupies residues 287–308; the sequence is FMTIPAFFAKSSSVYNPMIYIC. N6-(retinylidene)lysine is present on Lys296. The Cytoplasmic segment spans residues 309–354; sequence MNKQFRHCMITTLCCGKNPFEEEEGASTTASKTEASSVSSSSVSPA. 2 S-palmitoyl cysteine lipidation sites follow: Cys322 and Cys323. The tract at residues 333–354 is disordered; that stretch reads GASTTASKTEASSVSSSSVSPA. A compositionally biased stretch (low complexity) spans 334 to 354; sequence ASTTASKTEASSVSSSSVSPA.

This sequence belongs to the G-protein coupled receptor 1 family. Opsin subfamily. Phosphorylated on some or all of the serine and threonine residues present in the C-terminal region. In terms of processing, contains one covalently linked retinal chromophore.

Its subcellular location is the membrane. The protein localises to the cell projection. The protein resides in the cilium. It is found in the photoreceptor outer segment. In terms of biological role, photoreceptor required for image-forming vision at low light intensity. While most salt water fish species use retinal as chromophore, most freshwater fish use 3-dehydroretinal, or a mixture of retinal and 3-dehydroretinal. Light-induced isomerization of 11-cis to all-trans retinal triggers a conformational change that activates signaling via G-proteins. Subsequent receptor phosphorylation mediates displacement of the bound G-protein alpha subunit by arrestin and terminates signaling. This Salaria pavo (Peacock blenny) protein is Rhodopsin (rho).